Consider the following 554-residue polypeptide: Flavin-dependent halogenase ascD (554 aa).

FAD contacts are provided by glycine 15, glycine 18, and glutamate 48. Chloride is bound by residues serine 331 and glycine 332. FAD is bound at residue valine 333.

Belongs to the flavin-dependent halogenase family.

The catalysed reaction is ilicicolin B + FADH2 + chloride + O2 = ilicicolin A + FAD + 2 H2O + H(+). It participates in secondary metabolite biosynthesis; terpenoid biosynthesis. Flavin-dependent halogenase; part of the asc-1 gene cluster that mediates the biosynthesis of both ascochlorin and ascofuranone, a strong inhibitor of cyanide-insensitive alternative oxidases and a promising drug candidate against African trypanosomiasis. The first step in the pathway is performed by the non-reducing polyketide synthase ascC that produces orsellinic acid by condensing acetyl-CoA with 3 malonyl-CoA units. Orsellinic acid is then prenylated by the prenyltransferase ascA to yield ilicicolinic acid B. Ilicicolinic acid B is further reduced to ilicicolin B by the reductase ascB. The halogenase ascD then chlorinates ilicicolin B to produce ilicicolin A which is converted to ilicicolin A epoxide by the cytochrome P450 monooxygenase ascE that catalyzes stereoselective epoxidation of the terminal double bond of the prenyl group. Ilicicolin A epoxide is the last common precursor for the biosynthesis of ascofuranone and ascochlorin. The terpene cyclase ascF produces a monocyclic terpene, and the cyclization reaction is proposed to be initiated by protonation of the terminal epoxide of ilicicolin A epoxide to generate a monocyclic tertiarycation, which is followed by a series of hydride and methyl shifts with abstraction of proton, leading to the formation of the (14S,15R,19R)-trimethylcyclohexanone ring structure of ilicicolin C, which is finally reduced to ascochlorin by the dehydrogenase ascG. On the other hand, ilicicolin A epoxide is hydroxylated by the cytochrome P450 monooxygenase ascH, and the resultant product is cyclized by the terpene cyclase ascI to ascofuranol via protonation-initiated epoxide ring opening, which facilitates the 6-endo-tet cyclization to form the tetrahy-drofuran ring. Finally, ascofuranol is oxidized into ascofuranone by ascJ. This chain is Flavin-dependent halogenase ascD, found in Acremonium egyptiacum (Oospora egyptiaca).